We begin with the raw amino-acid sequence, 703 residues long: Subtilisin-like protease SBT4.7 (703 aa).

The N-terminal stretch at 1 to 19 (MAKRDYFCFVVLFLSSVSA) is a signal peptide. A propeptide spans 20-107 (VIDDPQNKQV…VFPNINYKLQ (88 aa)) (activation peptide). The Inhibitor I9 domain occupies 29–106 (VYVVYMGSLP…SVFPNINYKL (78 aa)). The region spanning 111-556 (SWDFLGLKEG…AGHVDQIAAI (446 aa)) is the Peptidase S8 domain. The active-site Charge relay system is Asp-139. Asn-170 carries an N-linked (GlcNAc...) asparagine glycan. Catalysis depends on His-194, which acts as the Charge relay system. N-linked (GlcNAc...) asparagine glycosylation is found at Asn-217, Asn-360, Asn-416, and Asn-433. Positions 350–411 (KYPLVYGDNF…LLPPDDFDSL (62 aa)) constitute a PA domain. Ser-495 functions as the Charge relay system in the catalytic mechanism. Asn-577, Asn-615, and Asn-633 each carry an N-linked (GlcNAc...) asparagine glycan.

This sequence belongs to the peptidase S8 family. The C-terminal propeptide is autocleaved.

It localises to the secreted. In Arabidopsis thaliana (Mouse-ear cress), this protein is Subtilisin-like protease SBT4.7.